The following is a 573-amino-acid chain: Thiol:disulfide interchange protein DsbD (573 aa).

The first 20 residues, 1 to 20, serve as a signal peptide directing secretion; that stretch reads MLKRFFLLLSSLLLVCNVQA. Over 21–175 the chain is Periplasmic; sequence GLFNNKPQYL…AENLSNNYLS (155 aa). Cystine bridges form between C121–C126 and C191–C313. A helical membrane pass occupies residues 176-196; it reads IFGFLLLGIGLAFTPCVLPML. Residues 197–227 lie on the Cytoplasmic side of the membrane; that stretch reads PLLSAIVIGHKNRPNTSRALLLSFTYVQGMA. A helical membrane pass occupies residues 228 to 248; that stretch reads LTYTLLGLTVAAIGLPFQVAL. Residues 249–251 are Periplasmic-facing; the sequence is QSP. A helical membrane pass occupies residues 252–272; it reads AVLISLAVLFTLLAASMFGLF. Over 273-292 the chain is Cytoplasmic; it reads EIRLPNTWQQKLNALSQQQQ. The chain crosses the membrane as a helical span at residues 293–313; the sequence is GGAVGNVFIMGIIAGLVASPC. Residues 314–331 lie on the Periplasmic side of the membrane; sequence TSAPLSGALLYVAQSGNL. A helical membrane pass occupies residues 332–352; the sequence is LIGGLALYLLALGMGLPLILI. The Cytoplasmic segment spans residues 353 to 365; sequence TVFGNQILPKSGE. A helical membrane pass occupies residues 366–386; that stretch reads WLFKVKTAFGFVMLALPIFLI. Topologically, residues 387-393 are periplasmic; it reads SRILPSH. A helical transmembrane segment spans residues 394–414; sequence YEPFLWSTLALAFLGWLISSL. The Cytoplasmic portion of the chain corresponds to 415-425; it reads NYSTMLKQAVR. A helical transmembrane segment spans residues 426–446; the sequence is ILLFIAFGLTAYPWANLVWQT. Residues 440–573 enclose the Thioredoxin domain; sequence ANLVWQTTSN…NQFLAWLNRL (134 aa). Residues 447-573 lie on the Periplasmic side of the membrane; sequence TSNTAQPTTP…NQFLAWLNRL (127 aa). C490 and C493 form a disulfide bridge.

It belongs to the thioredoxin family. DsbD subfamily.

The protein resides in the cell inner membrane. The enzyme catalyses [protein]-dithiol + NAD(+) = [protein]-disulfide + NADH + H(+). The catalysed reaction is [protein]-dithiol + NADP(+) = [protein]-disulfide + NADPH + H(+). Required to facilitate the formation of correct disulfide bonds in some periplasmic proteins and for the assembly of the periplasmic c-type cytochromes. Acts by transferring electrons from cytoplasmic thioredoxin to the periplasm. This transfer involves a cascade of disulfide bond formation and reduction steps. The protein is Thiol:disulfide interchange protein DsbD of Haemophilus ducreyi (strain 35000HP / ATCC 700724).